We begin with the raw amino-acid sequence, 206 residues long: Uridine kinase (206 aa).

Residue 9–16 (GGSGSGKT) participates in ATP binding.

Belongs to the uridine kinase family. As to quaternary structure, monomer.

It is found in the cytoplasm. It carries out the reaction uridine + ATP = UMP + ADP + H(+). It catalyses the reaction cytidine + ATP = CMP + ADP + H(+). Its pathway is pyrimidine metabolism; CTP biosynthesis via salvage pathway; CTP from cytidine: step 1/3. The protein operates within pyrimidine metabolism; UMP biosynthesis via salvage pathway; UMP from uridine: step 1/1. This chain is Uridine kinase (udk), found in Borreliella burgdorferi (strain ATCC 35210 / DSM 4680 / CIP 102532 / B31) (Borrelia burgdorferi).